We begin with the raw amino-acid sequence, 396 residues long: Phosphoglycerate kinase (396 aa).

Residues 21–23 (DFN), Arg36, 59–62 (HLGR), Arg119, and Arg156 each bind substrate. ATP-binding positions include Lys207, Glu325, and 352-355 (GGDS).

The protein belongs to the phosphoglycerate kinase family. Monomer.

It is found in the cytoplasm. The catalysed reaction is (2R)-3-phosphoglycerate + ATP = (2R)-3-phospho-glyceroyl phosphate + ADP. It participates in carbohydrate degradation; glycolysis; pyruvate from D-glyceraldehyde 3-phosphate: step 2/5. The protein is Phosphoglycerate kinase of Lacticaseibacillus casei (strain BL23) (Lactobacillus casei).